Reading from the N-terminus, the 96-residue chain is Translation initiation factor 1A 1 (96 aa).

Positions 8 to 82 constitute an S1-like domain; that stretch reads GSHDLRMPDD…EKGDITWRYE (75 aa).

It belongs to the eIF-1A family.

Its function is as follows. Seems to be required for maximal rate of protein biosynthesis. Enhances ribosome dissociation into subunits and stabilizes the binding of the initiator Met-tRNA(I) to 40 S ribosomal subunits. The protein is Translation initiation factor 1A 1 of Haloquadratum walsbyi (strain DSM 16790 / HBSQ001).